The primary structure comprises 217 residues: Small ribosomal subunit protein uS3 (217 aa).

The KH type-2 domain occupies 38–106; sequence IRQLIQTKLA…QVHINIVEIK (69 aa).

Belongs to the universal ribosomal protein uS3 family. As to quaternary structure, part of the 30S ribosomal subunit. Forms a tight complex with proteins S10 and S14.

Functionally, binds the lower part of the 30S subunit head. Binds mRNA in the 70S ribosome, positioning it for translation. The polypeptide is Small ribosomal subunit protein uS3 (Lactococcus lactis subsp. lactis (strain IL1403) (Streptococcus lactis)).